Reading from the N-terminus, the 198-residue chain is Recombination protein RecR (198 aa).

Residues 57–72 (CSVCGHITENDPCYIC) form a C4-type zinc finger. Residues 80–175 (SVICVVEDDK…KVTRLAQGLS (96 aa)) form the Toprim domain.

The protein belongs to the RecR family.

In terms of biological role, may play a role in DNA repair. It seems to be involved in an RecBC-independent recombinational process of DNA repair. It may act with RecF and RecO. The chain is Recombination protein RecR from Staphylococcus aureus (strain JH1).